The following is a 341-amino-acid chain: Serine/threonine-protein kinase PDIK1L (341 aa).

The region spanning 8–334 (YDLIREVGRG…LELRLVQIAF (327 aa)) is the Protein kinase domain. ATP-binding positions include 14 to 22 (VGRGSYGVV) and K37. The active-site Proton acceptor is D164.

It belongs to the protein kinase superfamily. Ser/Thr protein kinase family.

Its subcellular location is the nucleus. The enzyme catalyses L-seryl-[protein] + ATP = O-phospho-L-seryl-[protein] + ADP + H(+). The catalysed reaction is L-threonyl-[protein] + ATP = O-phospho-L-threonyl-[protein] + ADP + H(+). This chain is Serine/threonine-protein kinase PDIK1L (Pdik1l), found in Mus musculus (Mouse).